Here is a 153-residue protein sequence, read N- to C-terminus: 3-hydroxyacyl-[acyl-carrier-protein] dehydratase FabZ (153 aa).

Residue His57 is part of the active site.

It belongs to the thioester dehydratase family. FabZ subfamily.

Its subcellular location is the cytoplasm. The enzyme catalyses a (3R)-hydroxyacyl-[ACP] = a (2E)-enoyl-[ACP] + H2O. Functionally, involved in unsaturated fatty acids biosynthesis. Catalyzes the dehydration of short chain beta-hydroxyacyl-ACPs and long chain saturated and unsaturated beta-hydroxyacyl-ACPs. The polypeptide is 3-hydroxyacyl-[acyl-carrier-protein] dehydratase FabZ (Xanthomonas oryzae pv. oryzae (strain MAFF 311018)).